A 283-amino-acid polypeptide reads, in one-letter code: Polyamine aminopropyltransferase (283 aa).

Positions N5–K241 constitute a PABS domain. Q35 contacts S-methyl-5'-thioadenosine. Residues H66 and D90 each contribute to the spermidine site. S-methyl-5'-thioadenosine is bound by residues D110 and D141 to G142. D160 acts as the Proton acceptor in catalysis. Position 160 to 163 (D160 to D163) interacts with spermidine. S-methyl-5'-thioadenosine is bound at residue P167.

The protein belongs to the spermidine/spermine synthase family. As to quaternary structure, homodimer or homotetramer.

It is found in the cytoplasm. It carries out the reaction S-adenosyl 3-(methylsulfanyl)propylamine + putrescine = S-methyl-5'-thioadenosine + spermidine + H(+). The protein operates within amine and polyamine biosynthesis; spermidine biosynthesis; spermidine from putrescine: step 1/1. Catalyzes the irreversible transfer of a propylamine group from the amino donor S-adenosylmethioninamine (decarboxy-AdoMet) to putrescine (1,4-diaminobutane) to yield spermidine. This chain is Polyamine aminopropyltransferase, found in Stenotrophomonas maltophilia (strain R551-3).